The primary structure comprises 80 residues: MMKPLRQQNRQIISYIPRVEPAPPEHAIKMDTFRDVWILRGKYVAFVLTGESFQRSPAFSVPESAQRWANQVRQENEIAD.

It belongs to the CedA family.

Functionally, activates the cell division inhibited by chromosomal DNA over-replication. In Salmonella choleraesuis (strain SC-B67), this protein is Cell division activator CedA.